The chain runs to 209 residues: Thiamine-phosphate synthase (209 aa).

4-amino-2-methyl-5-(diphosphooxymethyl)pyrimidine is bound by residues 36–40 (QLRDK) and Asn-68. The Mg(2+) site is built by Asp-69 and Asp-88. Ser-107 lines the 4-amino-2-methyl-5-(diphosphooxymethyl)pyrimidine pocket. 133–135 (TNS) serves as a coordination point for 2-[(2R,5Z)-2-carboxy-4-methylthiazol-5(2H)-ylidene]ethyl phosphate. Residue Lys-136 participates in 4-amino-2-methyl-5-(diphosphooxymethyl)pyrimidine binding. 2-[(2R,5Z)-2-carboxy-4-methylthiazol-5(2H)-ylidene]ethyl phosphate-binding positions include Gly-164 and 184-185 (IT).

Belongs to the thiamine-phosphate synthase family. Mg(2+) is required as a cofactor.

It carries out the reaction 2-[(2R,5Z)-2-carboxy-4-methylthiazol-5(2H)-ylidene]ethyl phosphate + 4-amino-2-methyl-5-(diphosphooxymethyl)pyrimidine + 2 H(+) = thiamine phosphate + CO2 + diphosphate. It catalyses the reaction 2-(2-carboxy-4-methylthiazol-5-yl)ethyl phosphate + 4-amino-2-methyl-5-(diphosphooxymethyl)pyrimidine + 2 H(+) = thiamine phosphate + CO2 + diphosphate. The enzyme catalyses 4-methyl-5-(2-phosphooxyethyl)-thiazole + 4-amino-2-methyl-5-(diphosphooxymethyl)pyrimidine + H(+) = thiamine phosphate + diphosphate. It participates in cofactor biosynthesis; thiamine diphosphate biosynthesis; thiamine phosphate from 4-amino-2-methyl-5-diphosphomethylpyrimidine and 4-methyl-5-(2-phosphoethyl)-thiazole: step 1/1. In terms of biological role, condenses 4-methyl-5-(beta-hydroxyethyl)thiazole monophosphate (THZ-P) and 2-methyl-4-amino-5-hydroxymethyl pyrimidine pyrophosphate (HMP-PP) to form thiamine monophosphate (TMP). The protein is Thiamine-phosphate synthase of Shouchella clausii (strain KSM-K16) (Alkalihalobacillus clausii).